A 140-amino-acid chain; its full sequence is Cytochrome c-type biogenesis protein CcmE (140 aa).

At 1 to 7 (MKRKHKR) the chain is on the cytoplasmic side. The helical; Signal-anchor for type II membrane protein transmembrane segment at 8–28 (LLFVLASFCAAGCALLFILSE) threads the bilayer. Residues 29 to 140 (LRESVSFFYT…TIPKALPEPK (112 aa)) lie on the Periplasmic side of the membrane. His-121 and Tyr-125 together coordinate heme.

This sequence belongs to the CcmE/CycJ family.

Its subcellular location is the cell inner membrane. Its function is as follows. Heme chaperone required for the biogenesis of c-type cytochromes. Transiently binds heme delivered by CcmC and transfers the heme to apo-cytochromes in a process facilitated by CcmF and CcmH. This is Cytochrome c-type biogenesis protein CcmE from Anaplasma marginale (strain Florida).